The chain runs to 284 residues: Acetylglutamate kinase (284 aa).

Residues 64 to 65, Arg-86, and Asn-181 contribute to the substrate site; that span reads GG.

Belongs to the acetylglutamate kinase family. ArgB subfamily.

The protein localises to the cytoplasm. The enzyme catalyses N-acetyl-L-glutamate + ATP = N-acetyl-L-glutamyl 5-phosphate + ADP. It functions in the pathway amino-acid biosynthesis; L-arginine biosynthesis; N(2)-acetyl-L-ornithine from L-glutamate: step 2/4. In terms of biological role, catalyzes the ATP-dependent phosphorylation of N-acetyl-L-glutamate. The chain is Acetylglutamate kinase from Nitratiruptor sp. (strain SB155-2).